We begin with the raw amino-acid sequence, 78 residues long: Large ribosomal subunit protein bL28 (78 aa).

This sequence belongs to the bacterial ribosomal protein bL28 family.

The sequence is that of Large ribosomal subunit protein bL28 from Microcystis aeruginosa (strain NIES-843 / IAM M-2473).